A 335-amino-acid polypeptide reads, in one-letter code: tRNA N6-adenosine threonylcarbamoyltransferase (335 aa).

Residues His111 and His115 each contribute to the Fe cation site. Residues 133-137 (LISGG), Asp166, Gly179, and Asn276 each bind substrate. Asp301 lines the Fe cation pocket.

Belongs to the KAE1 / TsaD family. Requires Fe(2+) as cofactor.

Its subcellular location is the cytoplasm. The enzyme catalyses L-threonylcarbamoyladenylate + adenosine(37) in tRNA = N(6)-L-threonylcarbamoyladenosine(37) in tRNA + AMP + H(+). Required for the formation of a threonylcarbamoyl group on adenosine at position 37 (t(6)A37) in tRNAs that read codons beginning with adenine. Is involved in the transfer of the threonylcarbamoyl moiety of threonylcarbamoyl-AMP (TC-AMP) to the N6 group of A37, together with TsaE and TsaB. TsaD likely plays a direct catalytic role in this reaction. This is tRNA N6-adenosine threonylcarbamoyltransferase from Wolbachia sp. subsp. Brugia malayi (strain TRS).